The chain runs to 95 residues: uncharacterized protein (95 aa).

A helical membrane pass occupies residues Phe-3–Leu-23.

It localises to the membrane. This is an uncharacterized protein from Methanocaldococcus jannaschii (strain ATCC 43067 / DSM 2661 / JAL-1 / JCM 10045 / NBRC 100440) (Methanococcus jannaschii).